The following is a 286-amino-acid chain: Ribose-phosphate pyrophosphokinase (286 aa).

ATP contacts are provided by residues 34 to 36 and 91 to 93; these read DGE and RQH. 2 residues coordinate Mg(2+): H124 and D161. Residue K184 is part of the active site. Residues R186, D210, and 214–218 each bind D-ribose 5-phosphate; that span reads STGGT.

The protein belongs to the ribose-phosphate pyrophosphokinase family. Class III (archaeal) subfamily. In terms of assembly, homodimer. Mg(2+) serves as cofactor.

It is found in the cytoplasm. The enzyme catalyses D-ribose 5-phosphate + ATP = 5-phospho-alpha-D-ribose 1-diphosphate + AMP + H(+). Its pathway is metabolic intermediate biosynthesis; 5-phospho-alpha-D-ribose 1-diphosphate biosynthesis; 5-phospho-alpha-D-ribose 1-diphosphate from D-ribose 5-phosphate (route I): step 1/1. Involved in the biosynthesis of the central metabolite phospho-alpha-D-ribosyl-1-pyrophosphate (PRPP) via the transfer of pyrophosphoryl group from ATP to 1-hydroxyl of ribose-5-phosphate (Rib-5-P). In Thermoplasma volcanium (strain ATCC 51530 / DSM 4299 / JCM 9571 / NBRC 15438 / GSS1), this protein is Ribose-phosphate pyrophosphokinase.